The sequence spans 615 residues: Putative binding protein BRA0576/BS1330_II0571 (615 aa).

Positions 1–29 (MLNRFIAFFRSVFLIGLVATAFGALPARA) are cleaved as a signal peptide.

This sequence belongs to the bacterial solute-binding protein 5 family.

The protein resides in the periplasm. The polypeptide is Putative binding protein BRA0576/BS1330_II0571 (Brucella suis biovar 1 (strain 1330)).